The following is a 732-amino-acid chain: Cullin-3A (732 aa).

One can recognise a Cullin neddylation domain in the interval 662–724; the sequence is DRKPQIEAAI…RDFLERDSTD (63 aa). Lys-676 participates in a covalent cross-link: Glycyl lysine isopeptide (Lys-Gly) (interchain with G-Cter in NEDD8).

This sequence belongs to the cullin family. Interacts with CSN2 and RBX1A. Interacts with BTB/POZ domain-containing proteins BPM1, BPM2, BPM3, BPM6, BT1, BT2, BT3, BT5, AT1G01640, AT1G21780 and AT5G48510. Interacts with SR1IP1. Interacts with NPR3 and NPR4. Binds to NPR1; this interaction requires NPR3 and NPR4. In terms of processing, neddylated. Deneddylated via its interaction with the COP9 signalosome (CSN) complex.

Component of the cullin-RING ubiquitin ligases (CRL), or CUL3-RBX1-BTB protein E3 ligase complexes which mediate the ubiquitination and subsequent proteasomal degradation of target proteins. The functional specificity of the CRL complex depends on the BTB domain-containing protein as the substrate recognition component. Involved in embryo pattern formation and endosperm development. Required for the normal division and organization of the root stem cells and columella root cap cells. Regulates primary root growth by an unknown pathway, but in an ethylene-dependent manner. Functions in distal root patterning, by an ethylene-independent mechanism. Functionally redundant with CUL3B. This is Cullin-3A from Arabidopsis thaliana (Mouse-ear cress).